Reading from the N-terminus, the 289-residue chain is Energy-coupling factor transporter ATP-binding protein EcfA2 (289 aa).

The region spanning 7–251 is the ABC transporter domain; it reads IILDNVSYTY…IELLTKIEID (245 aa). 44-51 contacts ATP; sequence GTTGSGKS.

This sequence belongs to the ABC transporter superfamily. Energy-coupling factor EcfA family. As to quaternary structure, forms a stable energy-coupling factor (ECF) transporter complex composed of 2 membrane-embedded substrate-binding proteins (S component), 2 ATP-binding proteins (A component) and 2 transmembrane proteins (T component).

The protein resides in the cell membrane. ATP-binding (A) component of a common energy-coupling factor (ECF) ABC-transporter complex. Unlike classic ABC transporters this ECF transporter provides the energy necessary to transport a number of different substrates. In Mycoplasma capricolum subsp. capricolum (strain California kid / ATCC 27343 / NCTC 10154), this protein is Energy-coupling factor transporter ATP-binding protein EcfA2.